Here is a 394-residue protein sequence, read N- to C-terminus: Protein STRICTOSIDINE SYNTHASE-LIKE 1 (394 aa).

A signal peptide spans 1-21 (MESLLLIAYAFLYLFLLSHEA). The segment covering 61–73 (GLEKRPNHSEDNP) has biased composition (basic and acidic residues). Residues 61 to 92 (GLEKRPNHSEDNPPSRGWTGEPGLDPRGEGPY) are disordered. N-linked (GlcNAc...) asparagine glycosylation is found at Asn67, Asn122, and Asn196.

It belongs to the strictosidine synthase family.

It localises to the vacuole. This chain is Protein STRICTOSIDINE SYNTHASE-LIKE 1, found in Arabidopsis thaliana (Mouse-ear cress).